The primary structure comprises 300 residues: Jacalin-related lectin 33 (300 aa).

The segment at 1–20 (MAQKVEAGGGAGGASWDDGV) is disordered. Residue alanine 2 is modified to N-acetylalanine. 2 consecutive Jacalin-type lectin domains span residues 2–146 (AQKV…YFAT) and 154–297 (AKKL…HVMP).

The protein belongs to the jacalin lectin family. Component of the PYK10 complex, at least composed of PYK10/BGLU23, BGLU21, BGLU22, JAL22, JAL23, PBP1/JAL30, PBP2/JAL31, JAL32, JAL33, JAL34, JAL35, GLL22 and GLL23.

Functionally, sugar-binding protein showing significant affinity for (Glc alpha(1-4)Glc)(3) maltohexaose, (Glc alpha(1-6)Glc)(3) isomaltohexaose, Gal alpha(1-4)Gal beta(1-4)Glc, GalNAc alpha(1-3)(Fuc alpha(1-2)) and Gal beta(1-3)(Fuc alpha(1-4))GlcNAc beta(1-3)Gal beta(1-4)Glc. This chain is Jacalin-related lectin 33 (JAL33), found in Arabidopsis thaliana (Mouse-ear cress).